The following is a 320-amino-acid chain: ATP-dependent 6-phosphofructokinase (320 aa).

ATP contacts are provided by residues glycine 11, 72 to 73, and 102 to 105; these read RY and GDGS. Aspartate 103 contributes to the Mg(2+) binding site. Residues 125–127, arginine 162, 169–171, glutamate 222, arginine 243, and 249–252 contribute to the substrate site; these read TID, MGR, and HMQR. Catalysis depends on aspartate 127, which acts as the Proton acceptor.

Belongs to the phosphofructokinase type A (PFKA) family. ATP-dependent PFK group I subfamily. Prokaryotic clade 'B1' sub-subfamily. As to quaternary structure, homotetramer. Mg(2+) serves as cofactor.

The protein resides in the cytoplasm. The enzyme catalyses beta-D-fructose 6-phosphate + ATP = beta-D-fructose 1,6-bisphosphate + ADP + H(+). It functions in the pathway carbohydrate degradation; glycolysis; D-glyceraldehyde 3-phosphate and glycerone phosphate from D-glucose: step 3/4. Allosterically activated by ADP and other diphosphonucleosides, and allosterically inhibited by phosphoenolpyruvate. In terms of biological role, catalyzes the phosphorylation of D-fructose 6-phosphate to fructose 1,6-bisphosphate by ATP, the first committing step of glycolysis. The polypeptide is ATP-dependent 6-phosphofructokinase (Lactiplantibacillus plantarum (strain ATCC BAA-793 / NCIMB 8826 / WCFS1) (Lactobacillus plantarum)).